The following is a 207-amino-acid chain: MKKLFLASSFADVFDLFLDFAGNIQNKSITFIPTASKVEEVKFYVDDARNAFLQQGAFIDELDLSTASLAEITDKLAKNEMIYVSGGNTFFLLQELTRTGTAQLIQQHIQAGKMYIGESAGAMISAPNIDYVKYMDSLDQAPMLRDFTALNLVDFYVVPHYTNFPFVEAAQKIIDTYSTTLPLQPIDNHQAILVNNETKIIRGNHKG.

Active-site charge relay system residues include S119 and H160.

The protein belongs to the peptidase S51 family.

This is an uncharacterized protein from Pasteurella multocida (strain Pm70).